The primary structure comprises 183 residues: Translation initiation factor IF-3 (183 aa).

This sequence belongs to the IF-3 family. In terms of assembly, monomer.

Its subcellular location is the cytoplasm. Its function is as follows. IF-3 binds to the 30S ribosomal subunit and shifts the equilibrium between 70S ribosomes and their 50S and 30S subunits in favor of the free subunits, thus enhancing the availability of 30S subunits on which protein synthesis initiation begins. In Pseudomonas syringae pv. tomato (strain ATCC BAA-871 / DC3000), this protein is Translation initiation factor IF-3.